A 215-amino-acid polypeptide reads, in one-letter code: Urease accessory protein UreG (215 aa).

A GTP-binding site is contributed by 24–31 (GPVGSGKT).

This sequence belongs to the SIMIBI class G3E GTPase family. UreG subfamily. As to quaternary structure, homodimer. UreD, UreF and UreG form a complex that acts as a GTP-hydrolysis-dependent molecular chaperone, activating the urease apoprotein by helping to assemble the nickel containing metallocenter of UreC. The UreE protein probably delivers the nickel.

The protein localises to the cytoplasm. Facilitates the functional incorporation of the urease nickel metallocenter. This process requires GTP hydrolysis, probably effectuated by UreG. The protein is Urease accessory protein UreG of Burkholderia ambifaria (strain MC40-6).